The sequence spans 185 residues: Threonylcarbamoyl-AMP synthase (185 aa).

The region spanning 4 to 185 is the YrdC-like domain; sequence SWRVQQAARE…LATGNIVRPA (182 aa).

Belongs to the SUA5 family. TsaC subfamily.

It is found in the cytoplasm. It catalyses the reaction L-threonine + hydrogencarbonate + ATP = L-threonylcarbamoyladenylate + diphosphate + H2O. Required for the formation of a threonylcarbamoyl group on adenosine at position 37 (t(6)A37) in tRNAs that read codons beginning with adenine. Catalyzes the conversion of L-threonine, HCO(3)(-)/CO(2) and ATP to give threonylcarbamoyl-AMP (TC-AMP) as the acyladenylate intermediate, with the release of diphosphate. In Pseudomonas fluorescens (strain Pf0-1), this protein is Threonylcarbamoyl-AMP synthase.